The sequence spans 499 residues: Lysine--tRNA ligase (499 aa).

Mg(2+) contacts are provided by E408 and E415.

It belongs to the class-II aminoacyl-tRNA synthetase family. Homodimer. Mg(2+) is required as a cofactor.

The protein localises to the cytoplasm. The enzyme catalyses tRNA(Lys) + L-lysine + ATP = L-lysyl-tRNA(Lys) + AMP + diphosphate. The chain is Lysine--tRNA ligase from Bacillus cytotoxicus (strain DSM 22905 / CIP 110041 / 391-98 / NVH 391-98).